Here is a 538-residue protein sequence, read N- to C-terminus: Translation initiation factor IF-3, chloroplastic (538 aa).

A chloroplast-targeting transit peptide spans 1–140 (MVRSSCLQCD…VTQRKEIAVF (140 aa)). Residues 141-290 (SASGQAAEPE…EEVEEEQEVL (150 aa)) form a head region. Disordered stretches follow at residues 146 to 165 (AAEP…PAAK) and 188 to 210 (RTDS…NWPS). The IF-3 like stretch occupies residues 291–474 (SWADRRRALA…LILNLAPAGE (184 aa)). The disordered stretch occupies residues 484-538 (AERDRKAAAEEEGEGDDLDFVDENEDEDVEGEGEEEEAEELEEETAEGTEVPTRS). The segment covering 493 to 530 (EEEGEGDDLDFVDENEDEDVEGEGEEEEAEELEEETAE) has biased composition (acidic residues).

The protein belongs to the IF-3 family. Monomer. In terms of processing, the N-terminus is blocked.

It is found in the plastid. It localises to the chloroplast. Involved in chloroplast protein synthesis. It enhances the poly(A,U,G)-dependent binding of the initiator tRNA to chloroplast 30S subunits. The polypeptide is Translation initiation factor IF-3, chloroplastic (Euglena gracilis).